We begin with the raw amino-acid sequence, 159 residues long: Ribosomal RNA large subunit methyltransferase H (159 aa).

S-adenosyl-L-methionine-binding positions include leucine 76, glycine 107, and 126–131 (LSKLTM).

Belongs to the RNA methyltransferase RlmH family. In terms of assembly, homodimer.

The protein localises to the cytoplasm. The catalysed reaction is pseudouridine(1915) in 23S rRNA + S-adenosyl-L-methionine = N(3)-methylpseudouridine(1915) in 23S rRNA + S-adenosyl-L-homocysteine + H(+). Its function is as follows. Specifically methylates the pseudouridine at position 1915 (m3Psi1915) in 23S rRNA. In Acinetobacter baumannii (strain SDF), this protein is Ribosomal RNA large subunit methyltransferase H.